We begin with the raw amino-acid sequence, 455 residues long: Venom prothrombin activator hopsarin-D (455 aa).

Residues Met-1 to Ala-20 form the signal peptide. Positions Glu-21–Arg-40 are excised as a propeptide. The Gla domain maps to Ser-41–Asp-86. 11 positions are modified to 4-carboxyglutamate: Glu-46, Glu-47, Glu-54, Glu-56, Glu-59, Glu-60, Glu-65, Glu-66, Glu-69, Glu-72, and Glu-75. Cys-57 and Cys-62 are disulfide-bonded. Residues Asp-86 to Cys-121 form the EGF-like 1; calcium-binding domain. Intrachain disulfides connect Cys-90-Cys-101, Cys-95-Cys-110, Cys-112-Cys-121, Cys-129-Cys-140, Cys-136-Cys-149, Cys-151-Cys-164, Cys-172-Cys-328, Cys-236-Cys-252, Cys-376-Cys-390, and Cys-401-Cys-429. A glycan (O-linked (Hex...) serine) is linked at Ser-92. The EGF-like 2 domain occupies Cys-129–Cys-164. The propeptide at Arg-182 to Arg-209 is activation peptide. A Peptidase S1 domain is found at Ile-210 to Ser-453. His-251 acts as the Charge relay system in catalysis. Asn-254 is a glycosylation site (N-linked (GlcNAc...) asparagine). The active-site Charge relay system is Asp-308. Residue Ser-405 is the Charge relay system of the active site.

It belongs to the peptidase S1 family. Snake venom subfamily. In terms of assembly, heterodimer of a light chain and a heavy chain; disulfide-linked. The vitamin K-dependent, enzymatic carboxylation of some glutamate residues allows the modified protein to bind calcium. As to expression, expressed by the venom gland.

The protein resides in the secreted. The enzyme catalyses Selective cleavage of Arg-|-Thr and then Arg-|-Ile bonds in prothrombin to form thrombin.. Its function is as follows. Snake prothrombin activator that attacks the hemostatic system of prey. This protein is functionally similar to blood coagulation factor Xa. The procoagulant activity of hopsarin-D is approximately 10-fold lower than that of trocarin-D and FXa. The chain is Venom prothrombin activator hopsarin-D from Hoplocephalus stephensii (Stephens's banded snake).